The sequence spans 330 residues: Lipoyl synthase (330 aa).

[4Fe-4S] cluster is bound by residues Cys77, Cys82, Cys88, Cys103, Cys107, Cys110, and Ser317. Residues 89 to 306 enclose the Radical SAM core domain; sequence FNHGTATFMI…RSEAERMGFE (218 aa).

The protein belongs to the radical SAM superfamily. Lipoyl synthase family. [4Fe-4S] cluster is required as a cofactor.

Its subcellular location is the cytoplasm. The catalysed reaction is [[Fe-S] cluster scaffold protein carrying a second [4Fe-4S](2+) cluster] + N(6)-octanoyl-L-lysyl-[protein] + 2 oxidized [2Fe-2S]-[ferredoxin] + 2 S-adenosyl-L-methionine + 4 H(+) = [[Fe-S] cluster scaffold protein] + N(6)-[(R)-dihydrolipoyl]-L-lysyl-[protein] + 4 Fe(3+) + 2 hydrogen sulfide + 2 5'-deoxyadenosine + 2 L-methionine + 2 reduced [2Fe-2S]-[ferredoxin]. It functions in the pathway protein modification; protein lipoylation via endogenous pathway; protein N(6)-(lipoyl)lysine from octanoyl-[acyl-carrier-protein]: step 2/2. Functionally, catalyzes the radical-mediated insertion of two sulfur atoms into the C-6 and C-8 positions of the octanoyl moiety bound to the lipoyl domains of lipoate-dependent enzymes, thereby converting the octanoylated domains into lipoylated derivatives. This Actinobacillus pleuropneumoniae serotype 3 (strain JL03) protein is Lipoyl synthase.